Here is a 317-residue protein sequence, read N- to C-terminus: Large ribosomal subunit protein uL10 (317 aa).

Phosphotyrosine is present on tyrosine 24. Residue threonine 59 is modified to Phosphothreonine. Residue lysine 264 forms a Glycyl lysine isopeptide (Lys-Gly) (interchain with G-Cter in ubiquitin) linkage. Positions 294–317 are disordered; the sequence is APAKVEAKEESEESDEDMGFGLFD. A Glycyl lysine isopeptide (Lys-Gly) (interchain with G-Cter in SUMO1); alternate cross-link involves residue lysine 297. Lysine 297 participates in a covalent cross-link: Glycyl lysine isopeptide (Lys-Gly) (interchain with G-Cter in SUMO2); alternate. Positions 302 to 311 are enriched in acidic residues; the sequence is EESEESDEDM. A phosphoserine mark is found at serine 304 and serine 307.

It belongs to the universal ribosomal protein uL10 family. In terms of assembly, P0 forms a pentameric complex by interaction with dimers of P1 and P2. Identified in a IGF2BP1-dependent mRNP granule complex containing untranslated mRNAs. Interacts with APEX1. Interacts with FMR1 isoform 6. Post-translationally, ubiquitinated at Lys-264 by RNF14 and RNF25 in response to ribosome collisions (ribosome stalling).

The protein resides in the nucleus. Its subcellular location is the cytoplasm. Functionally, ribosomal protein P0 is the functional equivalent of E.coli protein L10. This is Large ribosomal subunit protein uL10 (RPLP0) from Homo sapiens (Human).